Reading from the N-terminus, the 90-residue chain is Sec-independent protein translocase protein TatA (90 aa).

The helical transmembrane segment at 1–21 threads the bilayer; sequence MGLPGGWELVLIVGVLVLLFG. The span at 42–60 shows a compositional bias: basic and acidic residues; it reads EARGMKEDEEAAKREKQAK. The segment at 42-90 is disordered; sequence EARGMKEDEEAAKREKQAKSEPQQLTAGESSAPTVASPVEETQRNDSKK. Residues 61–75 are compositionally biased toward polar residues; that stretch reads SEPQQLTAGESSAPT.

The protein belongs to the TatA/E family. In terms of assembly, the Tat system comprises two distinct complexes: a TatABC complex, containing multiple copies of TatA, TatB and TatC subunits, and a separate TatA complex, containing only TatA subunits. Substrates initially bind to the TatABC complex, which probably triggers association of the separate TatA complex to form the active translocon.

The protein resides in the cell membrane. In terms of biological role, part of the twin-arginine translocation (Tat) system that transports large folded proteins containing a characteristic twin-arginine motif in their signal peptide across membranes. TatA could form the protein-conducting channel of the Tat system. The sequence is that of Sec-independent protein translocase protein TatA from Saccharopolyspora erythraea (strain ATCC 11635 / DSM 40517 / JCM 4748 / NBRC 13426 / NCIMB 8594 / NRRL 2338).